Here is a 474-residue protein sequence, read N- to C-terminus: Glutamyl-tRNA(Gln) amidotransferase subunit A (474 aa).

Residues Lys-76 and Ser-151 each act as charge relay system in the active site. Catalysis depends on Ser-175, which acts as the Acyl-ester intermediate.

Belongs to the amidase family. GatA subfamily. In terms of assembly, heterotrimer of A, B and C subunits.

The enzyme catalyses L-glutamyl-tRNA(Gln) + L-glutamine + ATP + H2O = L-glutaminyl-tRNA(Gln) + L-glutamate + ADP + phosphate + H(+). Functionally, allows the formation of correctly charged Gln-tRNA(Gln) through the transamidation of misacylated Glu-tRNA(Gln) in organisms which lack glutaminyl-tRNA synthetase. The reaction takes place in the presence of glutamine and ATP through an activated gamma-phospho-Glu-tRNA(Gln). This chain is Glutamyl-tRNA(Gln) amidotransferase subunit A, found in Chlorobium limicola (strain DSM 245 / NBRC 103803 / 6330).